A 508-amino-acid polypeptide reads, in one-letter code: Photosystem II CP47 reaction center protein (508 aa).

A run of 6 helical transmembrane segments spans residues 21–36, 101–115, 140–156, 203–218, 237–252, and 457–472; these read SVHI…WAGS, IVFS…IWHW, GIHL…FGAF, IAAG…FHLS, VLSS…AFVV, and TFAL…HGAR.

It belongs to the PsbB/PsbC family. PsbB subfamily. In terms of assembly, PSII is composed of 1 copy each of membrane proteins PsbA, PsbB, PsbC, PsbD, PsbE, PsbF, PsbH, PsbI, PsbJ, PsbK, PsbL, PsbM, PsbT, PsbX, PsbY, PsbZ, Psb30/Ycf12, at least 3 peripheral proteins of the oxygen-evolving complex and a large number of cofactors. It forms dimeric complexes. Requires Binds multiple chlorophylls. PSII binds additional chlorophylls, carotenoids and specific lipids. as cofactor.

It localises to the plastid. The protein resides in the chloroplast thylakoid membrane. Its function is as follows. One of the components of the core complex of photosystem II (PSII). It binds chlorophyll and helps catalyze the primary light-induced photochemical processes of PSII. PSII is a light-driven water:plastoquinone oxidoreductase, using light energy to abstract electrons from H(2)O, generating O(2) and a proton gradient subsequently used for ATP formation. In Calycanthus floridus var. glaucus (Eastern sweetshrub), this protein is Photosystem II CP47 reaction center protein.